Reading from the N-terminus, the 208-residue chain is Mitochondrial import inner membrane translocase subunit Tim23 (208 aa).

3 helical membrane-spanning segments follow: residues 73–93 (FELA…FGTL), 125–145 (ASWA…GVAI), and 173–193 (GLKG…LYAL).

It belongs to the Tim17/Tim22/Tim23 family. As to quaternary structure, component of the TIM23 complex at least composed of timm23, timm17 and timm50. The complex interacts with the timm44 component of the PAM complex.

The protein resides in the mitochondrion inner membrane. Functionally, essential component of the TIM23 complex, a complex that mediates the translocation of transit peptide-containing proteins across the mitochondrial inner membrane. Plays an essential role in early embryonic development. The protein is Mitochondrial import inner membrane translocase subunit Tim23 (timm23) of Danio rerio (Zebrafish).